The primary structure comprises 761 residues: Xaa-Pro dipeptidyl-peptidase (761 aa).

Catalysis depends on charge relay system residues serine 349, aspartate 469, and histidine 499.

It belongs to the peptidase S15 family. Homodimer.

It localises to the cytoplasm. The enzyme catalyses Hydrolyzes Xaa-Pro-|- bonds to release unblocked, N-terminal dipeptides from substrates including Ala-Pro-|-p-nitroanilide and (sequentially) Tyr-Pro-|-Phe-Pro-|-Gly-Pro-|-Ile.. Its function is as follows. Removes N-terminal dipeptides sequentially from polypeptides having unsubstituted N-termini provided that the penultimate residue is proline. This chain is Xaa-Pro dipeptidyl-peptidase, found in Streptococcus equi subsp. equi (strain 4047).